The primary structure comprises 264 residues: NAD-capped RNA hydrolase NudC (264 aa).

Arginine 70 contributes to the substrate binding site. Positions 99 and 102 each coordinate Zn(2+). Glutamate 112 lines the substrate pocket. Zn(2+)-binding residues include cysteine 117 and cysteine 122. Tyrosine 127 contacts substrate. Positions 128 to 252 constitute a Nudix hydrolase domain; it reads PVICPCIIVA…TIALKLIEHT (125 aa). A divalent metal cation-binding residues include alanine 161, glutamate 177, and glutamate 181. Positions 162–183 match the Nudix box motif; that stretch reads GFVEVGETFEQAVHREVLEETG. 195–202 contacts substrate; sequence QPWAFPNS. Glutamate 222 is a binding site for a divalent metal cation. Alanine 245 lines the substrate pocket.

This sequence belongs to the Nudix hydrolase family. NudC subfamily. Homodimer. Requires Mg(2+) as cofactor. It depends on Mn(2+) as a cofactor. Zn(2+) is required as a cofactor.

It catalyses the reaction a 5'-end NAD(+)-phospho-ribonucleoside in mRNA + H2O = a 5'-end phospho-adenosine-phospho-ribonucleoside in mRNA + beta-nicotinamide D-ribonucleotide + 2 H(+). It carries out the reaction NAD(+) + H2O = beta-nicotinamide D-ribonucleotide + AMP + 2 H(+). The enzyme catalyses NADH + H2O = reduced beta-nicotinamide D-ribonucleotide + AMP + 2 H(+). MRNA decapping enzyme that specifically removes the nicotinamide adenine dinucleotide (NAD) cap from a subset of mRNAs by hydrolyzing the diphosphate linkage to produce nicotinamide mononucleotide (NMN) and 5' monophosphate mRNA. The NAD-cap is present at the 5'-end of some mRNAs and stabilizes RNA against 5'-processing. Has preference for mRNAs with a 5'-end purine. Catalyzes the hydrolysis of a broad range of dinucleotide pyrophosphates. The chain is NAD-capped RNA hydrolase NudC from Pasteurella multocida (strain Pm70).